Consider the following 62-residue polypeptide: Photosystem II reaction center protein Z (62 aa).

Transmembrane regions (helical) follow at residues 8 to 28 (AVFA…VVFA) and 41 to 61 (FSGT…NSLI).

It belongs to the PsbZ family. As to quaternary structure, PSII is composed of 1 copy each of membrane proteins PsbA, PsbB, PsbC, PsbD, PsbE, PsbF, PsbH, PsbI, PsbJ, PsbK, PsbL, PsbM, PsbT, PsbY, PsbZ, Psb30/Ycf12, at least 3 peripheral proteins of the oxygen-evolving complex and a large number of cofactors. It forms dimeric complexes.

Its subcellular location is the plastid. It is found in the chloroplast thylakoid membrane. Functionally, may control the interaction of photosystem II (PSII) cores with the light-harvesting antenna, regulates electron flow through the 2 photosystem reaction centers. PSII is a light-driven water plastoquinone oxidoreductase, using light energy to abstract electrons from H(2)O, generating a proton gradient subsequently used for ATP formation. The chain is Photosystem II reaction center protein Z from Pelargonium hortorum (Common geranium).